Reading from the N-terminus, the 346-residue chain is MKVLGIETSCDDCCVAVVENGIHILSNIKLSQKEHEKYYGVVPEIASRLHTEAIMSVCIKALKKANTKISEIDLIAVTSRPGLIGSLIVGLNFAKGLAISLKKPIICIDHILGHLYAPLMHSKIEYPFISLLLSGGHTLIAKQKNFDDVEILGRTLDDSCGEAFDKVAKHYDIGFPGGPNIEQISKNGDENTFKFPVTTFRKKENWYDFSYSGLKTACIHQLEKFKNKDNPTTKNNIAASFQKAAFENLITPLKRAIKDTQIKKLVIAGGVASNLYLREKIDKLKIQTYYPPLDLCTDNGAMIAGLGFNMYLKYGESPIEIEANSRIENYKNQYKRKNNEKNFSNA.

Residues His-110 and His-114 each contribute to the Fe cation site. Residues 132–136 (LLSGG), Asp-165, Gly-178, and Asn-274 contribute to the substrate site. Asp-298 serves as a coordination point for Fe cation.

It belongs to the KAE1 / TsaD family. Requires Fe(2+) as cofactor.

The protein localises to the cytoplasm. The catalysed reaction is L-threonylcarbamoyladenylate + adenosine(37) in tRNA = N(6)-L-threonylcarbamoyladenosine(37) in tRNA + AMP + H(+). In terms of biological role, required for the formation of a threonylcarbamoyl group on adenosine at position 37 (t(6)A37) in tRNAs that read codons beginning with adenine. Is involved in the transfer of the threonylcarbamoyl moiety of threonylcarbamoyl-AMP (TC-AMP) to the N6 group of A37, together with TsaE and TsaB. TsaD likely plays a direct catalytic role in this reaction. The chain is tRNA N6-adenosine threonylcarbamoyltransferase from Borreliella afzelii (strain PKo) (Borrelia afzelii).